Here is a 2792-residue protein sequence, read N- to C-terminus: E3 ubiquitin-protein ligase UBR5 (2792 aa).

T2 is modified (N-acetylthreonine). The span at 77–88 (DRLELGKPDNND) shows a compositional bias: basic and acidic residues. A disordered region spans residues 77–175 (DRLELGKPDN…DRGSGLLGSQ (99 aa)). A compositionally biased stretch (low complexity) spans 94–111 (SSSGTGRTSRPGRTSDSP). S110 is modified (phosphoserine). Residues 135 to 144 (GVGGSGGGSS) are compositionally biased toward gly residues. The region spanning 184–226 (VIPEELISQAQVVLQGKSRSVIIRELQRTNLDVNLAVNNLLSR) is the UBA domain. S321 carries the phosphoserine modification. Positions 322–341 (FDNERGSTSKEGESNPDKKN) are enriched in basic and acidic residues. The tract at residues 322–347 (FDNERGSTSKEGESNPDKKNTPVQSP) is disordered. 2 positions are modified to phosphoserine: S346 and S572. Positions 577–598 (KSMEKASKTLETKPESKQEPVK) are enriched in basic and acidic residues. The interval 577 to 642 (KSMEKASKTL…APREEEKVNE (66 aa)) is disordered. Phosphoserine is present on S606. Positions 608-622 (ASTCSDASSIASSAS) are enriched in low complexity. Position 631 is a phosphothreonine (T631). Phosphoserine is present on residues S802, S922, and S1012. Disordered regions lie at residues 993–1029 (AGLG…SMDP) and 1046–1069 (TAAT…EPSV). Residues 1011–1027 (VSPPIAPPSWVPDPPSM) show a composition bias toward pro residues. Residues 1046–1067 (TAATGSGQGPSTSTIPGPSTEP) show a composition bias toward polar residues. A phosphothreonine mark is found at T1109 and T1129. Residues 1171–1239 (DTCSFTWTGA…EKCKCKTLIA (69 aa)) form a UBR-type zinc finger. Phosphoserine is present on residues S1221, S1302, S1349, S1369, and S1475. Positions 1293-1312 (REDRNRKTASPEDSDMPDHD) are disordered. The tract at residues 1509 to 1734 (SVEPLPPRPS…PSSTSTPAAS (226 aa)) is disordered. Residues 1518-1531 (SSDQASSSSQSQSS) are compositionally biased toward low complexity. Over residues 1532 to 1547 (YIIRNPQQRRISQSQP) the composition is skewed to polar residues. Position 1543 is a phosphoserine (S1543). Acidic residues-rich tracts occupy residues 1553–1568 (EEQD…EVEV) and 1599–1608 (HDEDGSDMEL). Polar residues predominate over residues 1623–1632 (NHSNQDNASG). Composition is skewed to low complexity over residues 1635 to 1651 (SVVT…ASSV), 1662 to 1675 (SNDS…SSQS), and 1720 to 1734 (AAST…PAAS). T1730 carries the phosphothreonine modification. Position 1735 is a phosphoserine (S1735). Y1740 is subject to Phosphotyrosine. Position 1774 is a phosphoserine (S1774). A disordered region spans residues 1853-1884 (LASAGDPGHPNHPLHASQNSARRERMTAREEA). A compositionally biased stretch (basic and acidic residues) spans 1873-1884 (ARRERMTAREEA). Residue T1963 is modified to Phosphothreonine. Residues 1978-2015 (GIDNEDSEHENDDDTSQSATLNDKDDDSLPAETGQNHP) are disordered. The segment covering 1979 to 1992 (IDNEDSEHENDDDT) has biased composition (acidic residues). Residues S1984, S2020, and S2022 each carry the phosphoserine modification. Residue T2024 is modified to Phosphothreonine. Position 2070 is a phosphoserine (S2070). The interval 2111 to 2137 (RQKKEGEEQSLLAEEADSSKPGPSAPD) is disordered. Residue T2207 is modified to Phosphothreonine. Phosphoserine occurs at positions 2235 and 2283. Residues 2317–2387 (HTSLMQRLRN…SDDPDPLPAH (71 aa)) are disordered. Basic and acidic residues-rich tracts occupy residues 2326-2342 (NRGE…EMRR) and 2350-2362 (SRRD…RRQL). Residues 2371–2448 (PASEGNPSDD…AMELIIAHGR (78 aa)) form the PABC domain. In terms of domain architecture, HECT spans 2455 to 2792 (ILDLGLLDSS…AIKTKNFGFV (338 aa)). Phosphoserine occurs at positions 2463, 2477, and 2479. A disordered region spans residues 2467–2494 (VQENRKRHGSSRSVVDMDLEDTDDGDDN). The span at 2483-2493 (MDLEDTDDGDD) shows a compositional bias: acidic residues. The active-site Glycyl thioester intermediate is the C2761.

Belongs to the UBR5 family. In terms of assembly, homotetramer; composed of a dimer of dimers. Associates with CDK9 and TFIIS/TCEA1 and forms a transcription regulatory complex made of CDK9, RNAP II, UBR5 and TFIIS/TCEA1 that can stimulate target gene transcription (e.g. gamma fibrinogen/FGG) by recruiting their promoters. Associates with the E3 ligase complex containing DYRK2, EDD/UBR5, DDB1 and DCAF1 proteins (EDVP complex). Binds TOPBP1. Interacts with PIH1D1. Interacts with CIB1.

Its subcellular location is the nucleus. The protein localises to the cytoplasm. It carries out the reaction S-ubiquitinyl-[E2 ubiquitin-conjugating enzyme]-L-cysteine + [acceptor protein]-L-lysine = [E2 ubiquitin-conjugating enzyme]-L-cysteine + N(6)-ubiquitinyl-[acceptor protein]-L-lysine.. Its pathway is protein modification; protein ubiquitination. E3 ubiquitin-protein ligase involved in different protein quality control pathways in the cytoplasm and nucleus. Mainly acts as a ubiquitin chain elongator that extends pre-ubiquitinated substrates. Component of the N-end rule pathway: ubiquitinates proteins bearing specific N-terminal residues that are destabilizing according to the N-end rule, leading to their degradation. Recognizes type-1 N-degrons, containing positively charged amino acids (Arg, Lys and His). Together with UBR4, part of a cytoplasm protein quality control pathway that prevents protein aggregation by catalyzing assembly of heterotypic 'Lys-11'-/'Lys-48'-linked branched ubiquitin chains on aggregated proteins, leading to substrate recognition by the segregase p97/VCP and degradation by the proteasome: UBR5 is probably branching multiple 'Lys-48'-linked chains of substrates initially modified with mixed conjugates by UBR4. Together with ITCH, catalyzes 'Lys-48'-/'Lys-63'-branched ubiquitination of TXNIP, leading to its degradation: UBR5 mediates branching of 'Lys-48'-linked chains of substrates initially modified with 'Lys-63'-linked conjugates by ITCH. Catalytic component of a nuclear protein quality control pathway that mediates ubiquitination and degradation of unpaired transcription factors (i.e. transcription factors that are not assembled into functional multiprotein complexes): specifically recognizes and binds degrons that are not accessible when transcription regulators are associated with their coactivators. Ubiquitinates various unpaired transcription regulator (MYC, SUPT4H1, SUPT5H, CDC20 and MCRS1), as well as ligand-bound nuclear receptors (ESR1, NR1H3, NR3C1, PGR, RARA, RXRA AND VDR) that are not associated with their nuclear receptor coactivators (NCOAs). Involved in maturation and/or transcriptional regulation of mRNA by mediating polyubiquitination and activation of CDK9. Also acts as a regulator of DNA damage response by acting as a suppressor of RNF168, an E3 ubiquitin-protein ligase that promotes accumulation of 'Lys-63'-linked histone H2A and H2AX at DNA damage sites, thereby acting as a guard against excessive spreading of ubiquitinated chromatin at damaged chromosomes. Regulates DNA topoisomerase II binding protein (TopBP1) in the DNA damage response. Ubiquitinates acetylated PCK1. Acts as a positive regulator of the canonical Wnt signaling pathway by mediating (1) ubiquitination and stabilization of CTNNB1, and (2) 'Lys-48'-linked ubiquitination and degradation of TLE3. Promotes disassembly of the mitotic checkpoint complex (MCC) from the APC/C complex by catalyzing ubiquitination of BUB1B, BUB3 and CDC20. Plays an essential role in extraembryonic development. Required for the maintenance of skeletal tissue homeostasis by acting as an inhibitor of hedgehog (HH) signaling. In Mus musculus (Mouse), this protein is E3 ubiquitin-protein ligase UBR5.